The following is a 409-amino-acid chain: Peptidase T (409 aa).

Histidine 78 provides a ligand contact to Zn(2+). Aspartate 80 is an active-site residue. Aspartate 141 is a binding site for Zn(2+). The Proton acceptor role is filled by glutamate 175. Residues glutamate 176, aspartate 198, and histidine 380 each contribute to the Zn(2+) site.

The protein belongs to the peptidase M20B family. The cofactor is Zn(2+).

Its subcellular location is the cytoplasm. It carries out the reaction Release of the N-terminal residue from a tripeptide.. Functionally, cleaves the N-terminal amino acid of tripeptides. The sequence is that of Peptidase T from Caldanaerobacter subterraneus subsp. tengcongensis (strain DSM 15242 / JCM 11007 / NBRC 100824 / MB4) (Thermoanaerobacter tengcongensis).